Consider the following 442-residue polypeptide: Probable glycine dehydrogenase (decarboxylating) subunit 1 (442 aa).

It belongs to the GcvP family. N-terminal subunit subfamily. As to quaternary structure, the glycine cleavage system is composed of four proteins: P, T, L and H. In this organism, the P 'protein' is a heterodimer of two subunits.

It carries out the reaction N(6)-[(R)-lipoyl]-L-lysyl-[glycine-cleavage complex H protein] + glycine + H(+) = N(6)-[(R)-S(8)-aminomethyldihydrolipoyl]-L-lysyl-[glycine-cleavage complex H protein] + CO2. Its function is as follows. The glycine cleavage system catalyzes the degradation of glycine. The P protein binds the alpha-amino group of glycine through its pyridoxal phosphate cofactor; CO(2) is released and the remaining methylamine moiety is then transferred to the lipoamide cofactor of the H protein. The sequence is that of Probable glycine dehydrogenase (decarboxylating) subunit 1 from Phenylobacterium zucineum (strain HLK1).